The following is a 266-amino-acid chain: Decarboxylase tropJ (266 aa).

Catalysis depends on E80, which acts as the Proton acceptor. 4 residues coordinate Zn(2+): E80, H99, H101, and H180.

It belongs to the aldolase class II family. Zn(2+) is required as a cofactor.

It participates in secondary metabolite biosynthesis. Its function is as follows. Decarboxylase; part of the gene cluster that mediates the biosynthesis of the tropolone class of fungal maleic anhydrides. The pathway begins with the synthesis of 3-methylorcinaldehyde by the non-reducing polyketide synthase (PKS) tropA. 3-methylorcinaldehyde is the substrate for the FAD-dependent monooxygenase tropB to yield a dearomatized hydroxycyclohexadione. The 2-oxoglutarate-dependent dioxygenase tropC then performs the oxidative ring expansion to provide the first tropolone metabolite stipitaldehyde. Trop D converts stipitaldehyde into stipitacetal which is in turn converted to stipitalide by the short-chain dehydrogenase/reductase tropE. The next steps involve tropF, tropG, tropH, tropI and tropJ to form successive tropolone maleic anhydrides including stipitaldehydic, stipitatonic and stipitatic acids. In Talaromyces stipitatus (strain ATCC 10500 / CBS 375.48 / QM 6759 / NRRL 1006) (Penicillium stipitatum), this protein is Decarboxylase tropJ.